Reading from the N-terminus, the 634-residue chain is 1-deoxy-D-xylulose-5-phosphate synthase (634 aa).

Thiamine diphosphate contacts are provided by residues His73 and 114–116 (GHS). Asp145 is a binding site for Mg(2+). Thiamine diphosphate is bound by residues 146–147 (GA), Asn174, Tyr285, and Glu365. Mg(2+) is bound at residue Asn174.

This sequence belongs to the transketolase family. DXPS subfamily. Homodimer. Mg(2+) is required as a cofactor. Thiamine diphosphate serves as cofactor.

It carries out the reaction D-glyceraldehyde 3-phosphate + pyruvate + H(+) = 1-deoxy-D-xylulose 5-phosphate + CO2. Its pathway is metabolic intermediate biosynthesis; 1-deoxy-D-xylulose 5-phosphate biosynthesis; 1-deoxy-D-xylulose 5-phosphate from D-glyceraldehyde 3-phosphate and pyruvate: step 1/1. In terms of biological role, catalyzes the acyloin condensation reaction between C atoms 2 and 3 of pyruvate and glyceraldehyde 3-phosphate to yield 1-deoxy-D-xylulose-5-phosphate (DXP). The chain is 1-deoxy-D-xylulose-5-phosphate synthase from Desulforudis audaxviator (strain MP104C).